The primary structure comprises 948 residues: Coiled-coil domain-containing protein 66 (948 aa).

A phosphothreonine mark is found at Thr-115 and Thr-121. Residue Ser-369 is modified to Phosphoserine. The tract at residues 458 to 499 (DRRRQKQLEHQKAITAQVEEKRRKKQLEEEQRKKEEQEEELR) is disordered. Residues 467-558 (HQKAITAQVE…EQRIRELAQK (92 aa)) are a coiled coil. The mediates localization to cilia, centrosomes and spindle microtubules and the interaction with PCM1, CEP290, CEP104 and CSPP1 stretch occupies residues 570 to 948 (GVDTIQMEYN…NQEESFGSSF (379 aa)). Ser-606 carries the phosphoserine modification. Disordered stretches follow at residues 690–713 (QTKHMKKYPKRPDWNINKPPKRYI) and 788–808 (SFSKERSPSSPVPVVKNRTQQ).

As to quaternary structure, homodimer; disulfide-linked. Interacts with CEP290. Interacts with PCM1. Interacts with ARMC9, TOGARAM1, CSPP1 and CEP104. Interacts with CDK5RAP2, CEP152, CEP192, TBG1 and PRC1. In terms of tissue distribution, widely expressed (at protein level). Expressed in retina, mainly in photoreceptors but also in outer plexiform and ganglion cell layers (at protein level).

It is found in the cytoplasm. The protein localises to the cytoskeleton. Its subcellular location is the microtubule organizing center. It localises to the centrosome. The protein resides in the centriolar satellite. It is found in the cell projection. The protein localises to the cilium. Its subcellular location is the cilium basal body. It localises to the cilium axoneme. The protein resides in the photoreceptor inner segment. It is found in the photoreceptor outer segment. The protein localises to the spindle. Its subcellular location is the midbody. Microtubule-binding protein required for ciliogenesis. May function in ciliogenesis by mediating the transport of proteins like BBS4 to the cilium, but also through the organization of the centriolar satellites. Required for the assembly of signaling-competent cilia with proper structure and length. Mediates this function in part by regulating transition zone assembly and basal body recruitment of the IFT-B complex. Cooperates with the ciliopathy proteins CSPP1 and CEP104 during cilium length regulation. Plays two important roles during cell division. First, is required for mitotic progression via regulation of spindle assembly, organization and orientation, levels of spindle microtubules (MTs), kinetochore-fiber integrity, and chromosome alignment. Second, functions during cytokinesis in part by regulating assembly and organization of central spindle and midbody MTs. Plays a role in retina morphogenesis and/or homeostasis. The chain is Coiled-coil domain-containing protein 66 from Homo sapiens (Human).